A 260-amino-acid polypeptide reads, in one-letter code: MLEILYQDEWLVAVNKPSGWLVHRSWLDRDEKVVVMQTVRDQIGQHVFTAHRLDRPTSGVLLMGLSSEAGRLLAQQFEQHQIQKRYHAIVRGWLMEEAVLDYPLVEELDKIADKFAREDKGPQPAVTHYRGLATVEMPVATGRYPTTRYGLVELEPKTGRKHQLRRHLAHLRHPIIGDSKHGDLRQNRSGAEHFGLQRLMLHASQLSLTHPFTGEPLTIHAGLDDTWMQALSQFGWRGLLPENERVEFSAPSGQDGERSS.

Residue Asp54 is part of the active site.

This sequence belongs to the pseudouridine synthase RluA family.

It carries out the reaction uridine(65) in tRNA = pseudouridine(65) in tRNA. In terms of biological role, responsible for synthesis of pseudouridine from uracil-65 in transfer RNAs. This Escherichia coli O157:H7 protein is tRNA pseudouridine synthase C (truC).